We begin with the raw amino-acid sequence, 270 residues long: 3-methyl-2-oxobutanoate hydroxymethyltransferase (270 aa).

Asp41 and Asp80 together coordinate Mg(2+). 3-methyl-2-oxobutanoate is bound by residues 41–42 (DS), Asp80, and Lys109. Residue Glu111 participates in Mg(2+) binding. The Proton acceptor role is filled by Glu178.

This sequence belongs to the PanB family. As to quaternary structure, homodecamer; pentamer of dimers. It depends on Mg(2+) as a cofactor.

It localises to the cytoplasm. It carries out the reaction 3-methyl-2-oxobutanoate + (6R)-5,10-methylene-5,6,7,8-tetrahydrofolate + H2O = 2-dehydropantoate + (6S)-5,6,7,8-tetrahydrofolate. Its pathway is cofactor biosynthesis; (R)-pantothenate biosynthesis; (R)-pantoate from 3-methyl-2-oxobutanoate: step 1/2. Catalyzes the reversible reaction in which hydroxymethyl group from 5,10-methylenetetrahydrofolate is transferred onto alpha-ketoisovalerate to form ketopantoate. This Thermotoga sp. (strain RQ2) protein is 3-methyl-2-oxobutanoate hydroxymethyltransferase.